Here is a 299-residue protein sequence, read N- to C-terminus: uncharacterized protein (299 aa).

Residues 1–20 (MTTKHELVINTNEPSAPNAD) are disordered. The helical transmembrane segment at 172 to 192 (SFFIPPMVVISTPICLGLTVF) threads the bilayer.

This sequence belongs to the IIV-6 259R family.

The protein resides in the membrane. This is an uncharacterized protein from Acheta domesticus (House cricket).